The following is a 502-amino-acid chain: Keratin, type II microfibrillar, component 5 (502 aa).

The residue at position 1 (Ser1) is a Blocked amino end (Ser). The head stretch occupies residues 1 to 122 (SCRSYRISPG…PNAQCVKHQE (122 aa)). Positions 122–433 (EKEQIKNLNS…RLLEGEEQRL (312 aa)) constitute an IF rod domain. The segment at 123–157 (KEQIKNLNSRFAAFIDKVRFLEQQNKLLETKWQFY) is coil 1A. Residues 158–167 (QNQRCCESNL) are linker 1. Residues 168–268 (EPLFNGYIET…YDEEIQILNA (101 aa)) are coil 1B. Lys228 is covalently cross-linked (Glycyl lysine isopeptide (Lys-Gly) (interchain with G-Cter in SUMO1)). The interval 269 to 285 (HISDTSVIVKMDNSRDL) is linker 12. The tract at residues 286–429 (NMDCVVAEIK…ATYRRLLEGE (144 aa)) is coil 2. Positions 430-502 (EQRLCEGVGS…CGSSRSVRFA (73 aa)) are tail.

Belongs to the intermediate filament family. Hard keratin wool.

Its function is as follows. Wool microfibrillar keratin. In Ovis aries (Sheep), this protein is Keratin, type II microfibrillar, component 5.